The following is a 572-amino-acid chain: SHUGOSHIN 1 (572 aa).

Positions 59–110 form a coiled coil; that stretch reads KHQQQAILISSKENAENLQKENTKLMKVVMERDGIKSDLKKLRIEFQKVQEQ. 4 disordered regions span residues 185–221, 244–285, 333–352, and 484–572; these read DADHEHASGSSNANSLQRNEKANSKRRVSGRKNPANS, KLVS…QTET, ARLKSQEPEPSESFHDSIET, and SRRQ…RGGF. Positions 192–201 are enriched in polar residues; sequence SGSSNANSLQ. Basic and acidic residues-rich tracts occupy residues 244-257, 336-352, 523-542, and 552-572; these read KLVSDSDNDAENHI, KSQEPEPSESFHDSIET, ELKRESKKKPTGDESEEMRK, and AAEKIKSYKEPSLKEKMRGGF.

Belongs to the shugoshin family.

Its function is as follows. Protects sister chromatid centromere cohesion in meiosis I but not through the protection of the cohesin SYN1. Required with SGO2 for full protection of centromeric cohesion during anaphase I. Required to prevent precocious release of pericentromeric cohesins during meiosis. Not necessary for the maintenance of the synaptonemal complex (SC). Not required for monopolar spindle orientation in meiosis I. The polypeptide is SHUGOSHIN 1 (Arabidopsis thaliana (Mouse-ear cress)).